Reading from the N-terminus, the 152-residue chain is Interleukin-3 (152 aa).

The N-terminal stretch at Met-1–Gln-19 is a signal peptide. Asn-34 and Asn-89 each carry an N-linked (GlcNAc...) asparagine glycan. The cysteines at positions 35 and 103 are disulfide-linked.

The protein belongs to the IL-3 family. Interacts with IL3RA. Activated T-cells, mast cells, natural killer cells.

The protein resides in the secreted. Its function is as follows. Cytokine secreted predominantly by activated T-lymphocytes as well as mast cells and osteoblastic cells that controls the production and differentiation of hematopoietic progenitor cells into lineage-restricted cells. Also stimulates mature basophils, eosinophils, and monocytes to become functionally activated. In addition, plays an important role in neural cell proliferation and survival. Participates as well in bone homeostasis and inhibits osteoclast differentiation by preventing NF-kappa-B nuclear translocation and activation. Mechanistically, exerts its biological effects through a receptor composed of IL3RA subunit and a signal transducing subunit IL3RB. Receptor stimulation results in the rapid activation of JAK2 kinase activity leading to STAT5-mediated transcriptional program. Alternatively, contributes to cell survival under oxidative stress in non-hematopoietic systems by activating pathways mediated by PI3K/AKT and ERK. This chain is Interleukin-3, found in Homo sapiens (Human).